A 507-amino-acid chain; its full sequence is Arabinose import ATP-binding protein AraG (507 aa).

ABC transporter domains are found at residues 8 to 243 (LSFH…MVGR) and 255 to 499 (PHGE…MLRI). 40–47 (GENGAGKS) contributes to the ATP binding site.

Belongs to the ABC transporter superfamily. Arabinose importer (TC 3.A.1.2.2) family. The complex is composed of two ATP-binding proteins (AraG), two transmembrane proteins (AraH) and a solute-binding protein (AraF).

The protein localises to the cell inner membrane. The catalysed reaction is L-arabinose(out) + ATP + H2O = L-arabinose(in) + ADP + phosphate + H(+). Its function is as follows. Part of the ABC transporter complex AraFGH involved in arabinose import. Responsible for energy coupling to the transport system. This is Arabinose import ATP-binding protein AraG from Pectobacterium atrosepticum (strain SCRI 1043 / ATCC BAA-672) (Erwinia carotovora subsp. atroseptica).